The chain runs to 338 residues: 1-aminocyclopropane-1-carboxylate deaminase (338 aa).

Lysine 51 carries the post-translational modification N6-(pyridoxal phosphate)lysine. Catalysis depends on serine 78, which acts as the Nucleophile.

It belongs to the ACC deaminase/D-cysteine desulfhydrase family. In terms of assembly, homotrimer. Pyridoxal 5'-phosphate is required as a cofactor.

It carries out the reaction 1-aminocyclopropane-1-carboxylate + H2O = 2-oxobutanoate + NH4(+). Catalyzes a cyclopropane ring-opening reaction, the irreversible conversion of 1-aminocyclopropane-1-carboxylate (ACC) to ammonia and alpha-ketobutyrate. Allows growth on ACC as a nitrogen source. The polypeptide is 1-aminocyclopropane-1-carboxylate deaminase (Variovorax paradoxus).